Consider the following 491-residue polypeptide: Phosphatidylglycerol--prolipoprotein diacylglyceryl transferase (491 aa).

3 helical membrane passes run 24–44 (IPLR…IWWG), 58–78 (VLDV…AYHV), and 98–118 (IWQG…GAWI). Arginine 146 serves as a coordination point for a 1,2-diacyl-sn-glycero-3-phospho-(1'-sn-glycerol). Helical transmembrane passes span 192-212 (IVHP…IALV) and 256-276 (INNF…VFAT). A compositionally biased stretch (low complexity) spans 309-323 (NGPAEPGATASTATD). The tract at residues 309-491 (NGPAEPGATA…DRVDSGENDA (183 aa)) is disordered. Positions 347–360 (KGDRGTADAADTAK) are enriched in basic and acidic residues. Composition is skewed to low complexity over residues 361 to 387 (DASA…GSSD), 394 to 406 (AVKA…AAEK), and 415 to 438 (AGEA…SAKS). A compositionally biased stretch (basic and acidic residues) spans 453 to 462 (NESESTRDNE). Low complexity predominate over residues 463–481 (STSAGTAASATGSAGAGAT). The segment covering 482-491 (DRVDSGENDA) has biased composition (basic and acidic residues).

The protein belongs to the Lgt family.

Its subcellular location is the cell membrane. The enzyme catalyses L-cysteinyl-[prolipoprotein] + a 1,2-diacyl-sn-glycero-3-phospho-(1'-sn-glycerol) = an S-1,2-diacyl-sn-glyceryl-L-cysteinyl-[prolipoprotein] + sn-glycerol 1-phosphate + H(+). It functions in the pathway protein modification; lipoprotein biosynthesis (diacylglyceryl transfer). Catalyzes the transfer of the diacylglyceryl group from phosphatidylglycerol to the sulfhydryl group of the N-terminal cysteine of a prolipoprotein, the first step in the formation of mature lipoproteins. The protein is Phosphatidylglycerol--prolipoprotein diacylglyceryl transferase of Nocardia farcinica (strain IFM 10152).